The sequence spans 234 residues: tRNA (guanine-N(1)-)-methyltransferase (234 aa).

Residues Gly-115 and 135 to 140 contribute to the S-adenosyl-L-methionine site; that span reads VGDYIL.

It belongs to the RNA methyltransferase TrmD family. Homodimer.

The protein resides in the cytoplasm. The catalysed reaction is guanosine(37) in tRNA + S-adenosyl-L-methionine = N(1)-methylguanosine(37) in tRNA + S-adenosyl-L-homocysteine + H(+). Functionally, specifically methylates guanosine-37 in various tRNAs. The polypeptide is tRNA (guanine-N(1)-)-methyltransferase (Rickettsia rickettsii (strain Iowa)).